The primary structure comprises 439 residues: ATP-dependent protease ATPase subunit HslU (439 aa).

Residues Ile17, 59-64 (GVGKTE), Asp251, Glu317, and Arg389 each bind ATP.

Belongs to the ClpX chaperone family. HslU subfamily. A double ring-shaped homohexamer of HslV is capped on each side by a ring-shaped HslU homohexamer. The assembly of the HslU/HslV complex is dependent on binding of ATP.

Its subcellular location is the cytoplasm. Its function is as follows. ATPase subunit of a proteasome-like degradation complex; this subunit has chaperone activity. The binding of ATP and its subsequent hydrolysis by HslU are essential for unfolding of protein substrates subsequently hydrolyzed by HslV. HslU recognizes the N-terminal part of its protein substrates and unfolds these before they are guided to HslV for hydrolysis. This Campylobacter jejuni subsp. jejuni serotype O:2 (strain ATCC 700819 / NCTC 11168) protein is ATP-dependent protease ATPase subunit HslU.